The primary structure comprises 529 residues: Alkaline phosphatase, germ cell type (529 aa).

The first 18 residues, Met-1–Ser-18, serve as a signal peptide directing secretion. A Mg(2+)-binding site is contributed by Asp-60. Positions 60 and 110 each coordinate Zn(2+). Catalysis depends on Ser-110, which acts as the Phosphoserine intermediate. Cys-139 and Cys-201 are joined by a disulfide. Asn-140 is a glycosylation site (N-linked (GlcNAc...) asparagine). Ser-173 contacts Mg(2+). Glu-234 serves as a coordination point for Ca(2+). 2 N-linked (GlcNAc...) asparagine glycosylation sites follow: Asn-267 and Asn-277. The Ca(2+) site is built by Phe-287, Glu-288, and Asp-303. Glu-329 lines the Mg(2+) pocket. Asp-334, His-338, Asp-375, His-376, and His-450 together coordinate Zn(2+). A disulfide bond links Cys-485 and Cys-492. Ser-502 is lipidated: GPI-anchor amidated serine. Residues Ala-503–Pro-529 constitute a propeptide, removed in mature form.

It belongs to the alkaline phosphatase family. In terms of assembly, homodimer. It depends on Mg(2+) as a cofactor. Zn(2+) serves as cofactor. The cofactor is Ca(2+). Embryo and testis.

The protein resides in the cell membrane. It catalyses the reaction a phosphate monoester + H2O = an alcohol + phosphate. With respect to regulation, inhibited by L-leucine, EDTA and heat. Its function is as follows. Alkaline phosphatase that can hydrolyze various phosphate compounds. The polypeptide is Alkaline phosphatase, germ cell type (Alpg) (Mus musculus (Mouse)).